The primary structure comprises 301 residues: Ribosomal protein L11 methyltransferase (301 aa).

S-adenosyl-L-methionine is bound by residues Thr147, Gly168, Asp190, and Asn237.

It belongs to the methyltransferase superfamily. PrmA family.

It localises to the cytoplasm. The enzyme catalyses L-lysyl-[protein] + 3 S-adenosyl-L-methionine = N(6),N(6),N(6)-trimethyl-L-lysyl-[protein] + 3 S-adenosyl-L-homocysteine + 3 H(+). Its function is as follows. Methylates ribosomal protein L11. This is Ribosomal protein L11 methyltransferase from Synechococcus sp. (strain RCC307).